Reading from the N-terminus, the 367-residue chain is UDP-N-acetylglucosamine--N-acetylmuramyl-(pentapeptide) pyrophosphoryl-undecaprenol N-acetylglucosamine transferase (367 aa).

UDP-N-acetyl-alpha-D-glucosamine is bound by residues 21-23, Asn129, Arg170, Ser198, and Gln295; that span reads TGG.

The protein belongs to the glycosyltransferase 28 family. MurG subfamily.

The protein resides in the cell inner membrane. It catalyses the reaction di-trans,octa-cis-undecaprenyl diphospho-N-acetyl-alpha-D-muramoyl-L-alanyl-D-glutamyl-meso-2,6-diaminopimeloyl-D-alanyl-D-alanine + UDP-N-acetyl-alpha-D-glucosamine = di-trans,octa-cis-undecaprenyl diphospho-[N-acetyl-alpha-D-glucosaminyl-(1-&gt;4)]-N-acetyl-alpha-D-muramoyl-L-alanyl-D-glutamyl-meso-2,6-diaminopimeloyl-D-alanyl-D-alanine + UDP + H(+). It participates in cell wall biogenesis; peptidoglycan biosynthesis. Cell wall formation. Catalyzes the transfer of a GlcNAc subunit on undecaprenyl-pyrophosphoryl-MurNAc-pentapeptide (lipid intermediate I) to form undecaprenyl-pyrophosphoryl-MurNAc-(pentapeptide)GlcNAc (lipid intermediate II). In Synechococcus sp. (strain JA-2-3B'a(2-13)) (Cyanobacteria bacterium Yellowstone B-Prime), this protein is UDP-N-acetylglucosamine--N-acetylmuramyl-(pentapeptide) pyrophosphoryl-undecaprenol N-acetylglucosamine transferase.